Consider the following 152-residue polypeptide: UPF0178 protein YaiI (152 aa).

The protein belongs to the UPF0178 family.

The protein is UPF0178 protein YaiI of Shigella boydii serotype 18 (strain CDC 3083-94 / BS512).